The chain runs to 123 residues: Large ribosomal subunit protein bL12 (123 aa).

Belongs to the bacterial ribosomal protein bL12 family. As to quaternary structure, homodimer. Part of the ribosomal stalk of the 50S ribosomal subunit. Forms a multimeric L10(L12)X complex, where L10 forms an elongated spine to which 2 to 4 L12 dimers bind in a sequential fashion. Binds GTP-bound translation factors.

In terms of biological role, forms part of the ribosomal stalk which helps the ribosome interact with GTP-bound translation factors. Is thus essential for accurate translation. In Neisseria perflava, this protein is Large ribosomal subunit protein bL12.